A 62-amino-acid polypeptide reads, in one-letter code: UPF0434 protein Tola_2233 (62 aa).

This sequence belongs to the UPF0434 family.

This Tolumonas auensis (strain DSM 9187 / NBRC 110442 / TA 4) protein is UPF0434 protein Tola_2233.